The chain runs to 430 residues: Probable WRKY transcription factor 14 (430 aa).

The WRKY DNA-binding region spans 211-277 (SGEVVPSDLW…YTSEHNHPWP (67 aa)). A disordered region spans residues 283 to 366 (LAGSTRSSTS…APYRPELHDH (84 aa)). Positions 286-306 (STRSSTSSSSNPNPSKPSTAN) are enriched in low complexity. Residues 307–319 (VNSSSIGSQNTIY) show a composition bias toward polar residues. Residues 340 to 354 (GDDMELENVDDDDDN) are compositionally biased toward acidic residues.

The protein belongs to the WRKY group II-e family.

The protein resides in the nucleus. Transcription factor. Interacts specifically with the W box (5'-(T)TGAC[CT]-3'), a frequently occurring elicitor-responsive cis-acting element. The polypeptide is Probable WRKY transcription factor 14 (WRKY14) (Arabidopsis thaliana (Mouse-ear cress)).